We begin with the raw amino-acid sequence, 91 residues long: Small ribosomal subunit protein uS19 (91 aa).

This sequence belongs to the universal ribosomal protein uS19 family.

In terms of biological role, protein S19 forms a complex with S13 that binds strongly to the 16S ribosomal RNA. The sequence is that of Small ribosomal subunit protein uS19 from Desulfotalea psychrophila (strain LSv54 / DSM 12343).